The sequence spans 115 residues: Mobilization protein MbeC (115 aa).

It to E.coli MbaC and MbkC. As to quaternary structure, homodimer. Interacts with MbeA and MbeB to form the relaxosome.

Its function is as follows. Required for efficient mobilization of ColE1 plasmid and is thus essential to promote the specific transfer of the plasmid during conjugation. Probably functions by inducing DNA bending, helping the MbeA relaxase to melt the DNA around the nic site and cleave the phosphodiester bond. Binds specifically double-stranded DNA (dsDNA) containing the ColE1 oriT but does not recognize the inverted repeat (IR). This chain is Mobilization protein MbeC (mbeC), found in Escherichia coli.